Here is a 539-residue protein sequence, read N- to C-terminus: CTP synthase (539 aa).

The segment at 1-267 (MTKYIFVTGG…DQKVCDFLHL (267 aa)) is amidoligase domain. Position 13 (Ser-13) interacts with CTP. Ser-13 contacts UTP. Position 14 to 19 (14 to 19 (SLGKGI)) interacts with ATP. Residue Tyr-54 coordinates L-glutamine. Residue Asp-71 participates in ATP binding. 2 residues coordinate Mg(2+): Asp-71 and Glu-141. CTP is bound by residues 148 to 150 (DIE), 188 to 193 (KTKPTQ), and Lys-224. UTP contacts are provided by residues 188–193 (KTKPTQ) and Lys-224. The 244-residue stretch at 294–537 (KITLVGKYVE…IGAASGLPAQ (244 aa)) folds into the Glutamine amidotransferase type-1 domain. Gly-356 is an L-glutamine binding site. Catalysis depends on Cys-383, which acts as the Nucleophile; for glutamine hydrolysis. L-glutamine contacts are provided by residues 384–387 (LGMQ), Glu-407, and Arg-465. Catalysis depends on residues His-510 and Glu-512.

This sequence belongs to the CTP synthase family. In terms of assembly, homotetramer.

The enzyme catalyses UTP + L-glutamine + ATP + H2O = CTP + L-glutamate + ADP + phosphate + 2 H(+). The catalysed reaction is L-glutamine + H2O = L-glutamate + NH4(+). It carries out the reaction UTP + NH4(+) + ATP = CTP + ADP + phosphate + 2 H(+). It functions in the pathway pyrimidine metabolism; CTP biosynthesis via de novo pathway; CTP from UDP: step 2/2. Its activity is regulated as follows. Allosterically activated by GTP, when glutamine is the substrate; GTP has no effect on the reaction when ammonia is the substrate. The allosteric effector GTP functions by stabilizing the protein conformation that binds the tetrahedral intermediate(s) formed during glutamine hydrolysis. Inhibited by the product CTP, via allosteric rather than competitive inhibition. Catalyzes the ATP-dependent amination of UTP to CTP with either L-glutamine or ammonia as the source of nitrogen. Regulates intracellular CTP levels through interactions with the four ribonucleotide triphosphates. This chain is CTP synthase, found in Lactobacillus acidophilus (strain ATCC 700396 / NCK56 / N2 / NCFM).